The sequence spans 401 residues: DNA replication and repair protein RecF (401 aa).

ATP is bound at residue 30 to 37; the sequence is GYNGIGKT.

The protein belongs to the RecF family.

The protein localises to the cytoplasm. In terms of biological role, the RecF protein is involved in DNA metabolism; it is required for DNA replication and normal SOS inducibility. RecF binds preferentially to single-stranded, linear DNA. It also seems to bind ATP. This is DNA replication and repair protein RecF from Arthrobacter sp. (strain FB24).